Consider the following 313-residue polypeptide: Tyrosine recombinase slr0733 (313 aa).

The Core-binding (CB) domain maps to 7–101 (NNLSGLNQNI…AIKSLVNYAR (95 aa)). The Tyr recombinase domain occupies 122–307 (RDTTGVSPTS…RHQHQAQITD (186 aa)). Active-site residues include R162, K188, H258, R261, and H285. Y294 serves as the catalytic O-(3'-phospho-DNA)-tyrosine intermediate.

This sequence belongs to the 'phage' integrase family.

It localises to the cytoplasm. Site-specific tyrosine recombinase, which acts by catalyzing the cutting and rejoining of the recombining DNA molecules. In Synechocystis sp. (strain ATCC 27184 / PCC 6803 / Kazusa), this protein is Tyrosine recombinase slr0733.